We begin with the raw amino-acid sequence, 191 residues long: UPF0149 protein VC_2476 (191 aa).

This sequence belongs to the UPF0149 family.

This Vibrio cholerae serotype O1 (strain ATCC 39315 / El Tor Inaba N16961) protein is UPF0149 protein VC_2476.